The primary structure comprises 155 residues: Protein-export protein SecB (155 aa).

The protein belongs to the SecB family. Homotetramer, a dimer of dimers. One homotetramer interacts with 1 SecA dimer.

The protein resides in the cytoplasm. Its function is as follows. One of the proteins required for the normal export of preproteins out of the cell cytoplasm. It is a molecular chaperone that binds to a subset of precursor proteins, maintaining them in a translocation-competent state. It also specifically binds to its receptor SecA. The polypeptide is Protein-export protein SecB (Paramagnetospirillum magneticum (strain ATCC 700264 / AMB-1) (Magnetospirillum magneticum)).